Here is a 428-residue protein sequence, read N- to C-terminus: MLDIQFIREHTDIVKESQRKRGESVELVDEVLSSDTARREALKAFEEARAQQKEIGKKVASAPADEKAKLIAETKELSQKVSEYKSKADSAAEEYTTAMWKLSNIVEPEAPEGGEDDYVVVKKVGQIRDFAAEGFEPKDHLTLGTGVAGIDMRRGVKVGGSRFYFLRGQVARMQIAMLTMAVDQAEEHGFTLAITPTLVRPEVMRGTGFLNSHADEIYRLREPDDQYLVGTSEVALAGMHENEILDLGNGPLRYCGWSSCYRREAGAAGKDTSGIIRVHQFDKVEMFVYAKQEDSYKEHEHLLAMEQEMLAKVEVPYRIIDTAAGDLGSSAARKFDCEAWVPTQGRYRELTSTSNCTEYQARRLNIRERMEDGGTRPVSTLNGTLATTRWLVAIMENHQQKDGSIEIPQAMRAYMGGKEVIEPTKWEA.

231 to 233 (TSE) is a binding site for L-serine. ATP-binding positions include 262–264 (RRE) and valine 278. Glutamate 285 serves as a coordination point for L-serine. An ATP-binding site is contributed by 349-352 (ELTS). Threonine 384 provides a ligand contact to L-serine.

It belongs to the class-II aminoacyl-tRNA synthetase family. Type-1 seryl-tRNA synthetase subfamily. In terms of assembly, homodimer. The tRNA molecule binds across the dimer.

The protein resides in the cytoplasm. The catalysed reaction is tRNA(Ser) + L-serine + ATP = L-seryl-tRNA(Ser) + AMP + diphosphate + H(+). The enzyme catalyses tRNA(Sec) + L-serine + ATP = L-seryl-tRNA(Sec) + AMP + diphosphate + H(+). Its pathway is aminoacyl-tRNA biosynthesis; selenocysteinyl-tRNA(Sec) biosynthesis; L-seryl-tRNA(Sec) from L-serine and tRNA(Sec): step 1/1. Catalyzes the attachment of serine to tRNA(Ser). Is also able to aminoacylate tRNA(Sec) with serine, to form the misacylated tRNA L-seryl-tRNA(Sec), which will be further converted into selenocysteinyl-tRNA(Sec). The chain is Serine--tRNA ligase from Bifidobacterium longum (strain DJO10A).